A 334-amino-acid chain; its full sequence is Cytosolic Fe-S cluster assembly factor NBP35 (334 aa).

Cys33, Cys47, Cys50, and Cys56 together coordinate [4Fe-4S] cluster. 86–93 (GKGGVGKS) serves as a coordination point for ATP. Positions 259 and 262 each coordinate [4Fe-4S] cluster.

Belongs to the Mrp/NBP35 ATP-binding proteins family. NUBP1/NBP35 subfamily. As to quaternary structure, heterotetramer of 2 NBP35 and 2 CFD1 chains. The cofactor is [4Fe-4S] cluster.

Its subcellular location is the cytoplasm. It localises to the nucleus. Component of the cytosolic iron-sulfur (Fe/S) protein assembly (CIA) machinery. Required for maturation of extramitochondrial Fe-S proteins. The NBP35-CFD1 heterotetramer forms a Fe-S scaffold complex, mediating the de novo assembly of an Fe-S cluster and its transfer to target apoproteins. Required for biogenesis and export of both ribosomal subunits, which may reflect a role in assembly of the Fe/S clusters in RLI1, a protein which performs rRNA processing and ribosome export. The polypeptide is Cytosolic Fe-S cluster assembly factor NBP35 (Candida glabrata (strain ATCC 2001 / BCRC 20586 / JCM 3761 / NBRC 0622 / NRRL Y-65 / CBS 138) (Yeast)).